The following is a 363-amino-acid chain: Galactokinase (363 aa).

16 to 19 (EHTD) contributes to the substrate binding site. ATP is bound by residues S50 and 103-109 (GSGLSSS). Positions 109 and 141 each coordinate Mg(2+). The Proton acceptor role is filled by D153. Y205 contacts substrate.

The protein belongs to the GHMP kinase family. GalK subfamily.

Its subcellular location is the cytoplasm. The enzyme catalyses alpha-D-galactose + ATP = alpha-D-galactose 1-phosphate + ADP + H(+). It functions in the pathway carbohydrate metabolism; galactose metabolism. Its function is as follows. Catalyzes the transfer of the gamma-phosphate of ATP to D-galactose to form alpha-D-galactose-1-phosphate (Gal-1-P). This is Galactokinase from Mycobacterium bovis (strain ATCC BAA-935 / AF2122/97).